The chain runs to 578 residues: CTP synthase 2 (578 aa).

In terms of domain architecture, Glutamine amidotransferase type-1 spans 305–564; it reads KIALVGKYTN…VAAASGTLGD (260 aa). Active-site for GATase activity residues include Cys-404, His-537, and Glu-539.

It belongs to the CTP synthase family. As to quaternary structure, homodimer. Oligomerizes to a tetramer in the presence of its substrates UTP and ATP. It depends on Mg(2+) as a cofactor.

It is found in the cytoplasm. It carries out the reaction UTP + L-glutamine + ATP + H2O = CTP + L-glutamate + ADP + phosphate + 2 H(+). Its pathway is pyrimidine metabolism; CTP biosynthesis via de novo pathway; CTP from UDP: step 2/2. Its activity is regulated as follows. Activated by GTP. Subject to allosteric product inhibition by CTP. Inhibited by p-chloromercuriphenylsulfonic acid, N-ethylmaleimide and cyclopentenylcytosine (CPEC). Functionally, catalyzes the ATP-dependent amination of UTP to CTP with either L-glutamine or ammonia as the source of nitrogen. Plays an important role in the regulation of phospholipid synthesis. This Saccharomyces cerevisiae (strain YJM789) (Baker's yeast) protein is CTP synthase 2 (URA8).